The following is a 296-amino-acid chain: Fructose-bisphosphate aldolase class 1 (296 aa).

The active-site Proton acceptor is Glu175. The active-site Schiff-base intermediate with dihydroxyacetone-P is Lys212.

The protein belongs to the class I fructose-bisphosphate aldolase family.

It catalyses the reaction beta-D-fructose 1,6-bisphosphate = D-glyceraldehyde 3-phosphate + dihydroxyacetone phosphate. It functions in the pathway carbohydrate degradation; glycolysis; D-glyceraldehyde 3-phosphate and glycerone phosphate from D-glucose: step 4/4. The polypeptide is Fructose-bisphosphate aldolase class 1 (Staphylococcus aureus (strain USA300)).